The sequence spans 438 residues: tRNA(Ile)-lysidine synthase (438 aa).

27–32 contacts ATP; it reads SGGVDS.

This sequence belongs to the tRNA(Ile)-lysidine synthase family.

It localises to the cytoplasm. The catalysed reaction is cytidine(34) in tRNA(Ile2) + L-lysine + ATP = lysidine(34) in tRNA(Ile2) + AMP + diphosphate + H(+). Its function is as follows. Ligates lysine onto the cytidine present at position 34 of the AUA codon-specific tRNA(Ile) that contains the anticodon CAU, in an ATP-dependent manner. Cytidine is converted to lysidine, thus changing the amino acid specificity of the tRNA from methionine to isoleucine. The protein is tRNA(Ile)-lysidine synthase of Vibrio parahaemolyticus serotype O3:K6 (strain RIMD 2210633).